Here is a 405-residue protein sequence, read N- to C-terminus: Histidine decarboxylase (405 aa).

His-121 lines the substrate pocket. Lys-234 carries the post-translational modification N6-(pyridoxal phosphate)lysine.

This sequence belongs to the group II decarboxylase family. In terms of assembly, homotetramer. Pyridoxal 5'-phosphate serves as cofactor.

The enzyme catalyses L-histidine + H(+) = histamine + CO2. It functions in the pathway siderophore biosynthesis; pseudomonine biosynthesis. This is Histidine decarboxylase from Pseudomonas fluorescens.